The following is a 354-amino-acid chain: MSGLNGFEGDNFYIPMSNRTGLVRDPFVYEQYYLAEPWQFKLLACYMFFLICLGLPINGFTLFVTAQHKKLQQPLNFILVNLAVAGMIMVCFGFTITISSAVNGYFYFGPTACAIEGFMATLGGEVALWSLVVLAIERYIVVCKPMGSFKFSASHALGGIGFTWFMAMTCAAPPLVGWSRYIPEGLQCSCGPDYYTLNPKYNNESYVIYMFVVHFIVPVTVIFFTYGRLVCTVKSAAAAQQDSASTQKAEKEVTRMVILMVVGFLVAWTPYATVAAWIFFNKGAAFTAQFMAVPAFFSKSSALFNPIIYVLLNKQFRNCMLTTLFCGKNPLGDEESSTVSTKTEVSTVSSVSPA.

At 1 to 39 the chain is on the extracellular side; it reads MSGLNGFEGDNFYIPMSNRTGLVRDPFVYEQYYLAEPWQ. Asn18 carries an N-linked (GlcNAc...) asparagine glycan. The helical transmembrane segment at 40–64 threads the bilayer; the sequence is FKLLACYMFFLICLGLPINGFTLFV. Residues 65-76 are Cytoplasmic-facing; it reads TAQHKKLQQPLN. A helical transmembrane segment spans residues 77–102; it reads FILVNLAVAGMIMVCFGFTITISSAV. Over 103-116 the chain is Extracellular; sequence NGYFYFGPTACAIE. Residues Cys113 and Cys190 are joined by a disulfide bond. Residues 117 to 136 form a helical membrane-spanning segment; it reads GFMATLGGEVALWSLVVLAI. Residues 137 to 155 are Cytoplasmic-facing; the sequence is ERYIVVCKPMGSFKFSASH. The helical transmembrane segment at 156 to 179 threads the bilayer; sequence ALGGIGFTWFMAMTCAAPPLVGWS. Over 180–205 the chain is Extracellular; that stretch reads RYIPEGLQCSCGPDYYTLNPKYNNES. The N-linked (GlcNAc...) asparagine glycan is linked to Asn203. Residues 206–233 form a helical membrane-spanning segment; the sequence is YVIYMFVVHFIVPVTVIFFTYGRLVCTV. Residues 234–255 lie on the Cytoplasmic side of the membrane; that stretch reads KSAAAAQQDSASTQKAEKEVTR. Residues 256-279 traverse the membrane as a helical segment; it reads MVILMVVGFLVAWTPYATVAAWIF. Residues 280–287 are Extracellular-facing; it reads FNKGAAFT. Residues 288 to 312 traverse the membrane as a helical segment; that stretch reads AQFMAVPAFFSKSSALFNPIIYVLL. Lys299 carries the N6-(retinylidene)lysine modification. The Cytoplasmic segment spans residues 313 to 354; that stretch reads NKQFRNCMLTTLFCGKNPLGDEESSTVSTKTEVSTVSSVSPA.

It belongs to the G-protein coupled receptor 1 family. Opsin subfamily. The color pigments are found in the cone photoreceptor cells.

The protein localises to the membrane. Its function is as follows. Visual pigments are the light-absorbing molecules that mediate vision. They consist of an apoprotein, opsin, covalently linked to cis-retinal. This is Green-sensitive opsin-3 (RH11) from Psalidodon fasciatus (Banded astyanax).